We begin with the raw amino-acid sequence, 285 residues long: Nudix hydrolase 15, mitochondrial (285 aa).

The N-terminal 23 residues, 1–23, are a transit peptide targeting the mitochondrion; the sequence is MFLLYRRLPSFARTTTTTLLCKS. At methionine 24 the chain carries N-acetylmethionine. Disordered stretches follow at residues 51 to 72 and 129 to 152; these read RQYKPPPSSSFDDSEEMQTDQE and THSGEVSLPGGKAEEDDKDDGMTA. The 157-residue stretch at 99–255 folds into the Nudix hydrolase domain; it reads PKRAAVLICL…DKDYMIWGLT (157 aa). A Nudix box motif is present at residues 140–161; that stretch reads KAEEDDKDDGMTATREAEEEIG. Mg(2+) is bound by residues glutamate 155 and glutamate 159.

Belongs to the Nudix hydrolase family. It depends on Mg(2+) as a cofactor. The cofactor is Mn(2+). As to expression, expressed in roots, leaves, stems and inflorescences.

It is found in the mitochondrion. Its function is as follows. Coenzyme A diphosphatase which mediates the cleavage of oxidized CoA. Can use malonyl-CoA, hexanoyl-CoA, lauroyl-CoA, myristoyl-CoA and palmitoyl-CoA as substrates, but not isobutyryl-CoA or propionyl-CoA. The sequence is that of Nudix hydrolase 15, mitochondrial (NUDT15) from Arabidopsis thaliana (Mouse-ear cress).